The primary structure comprises 140 residues: Ribosome-binding factor A (140 aa).

This sequence belongs to the RbfA family. As to quaternary structure, monomer. Binds 30S ribosomal subunits, but not 50S ribosomal subunits or 70S ribosomes.

The protein resides in the cytoplasm. Functionally, one of several proteins that assist in the late maturation steps of the functional core of the 30S ribosomal subunit. Associates with free 30S ribosomal subunits (but not with 30S subunits that are part of 70S ribosomes or polysomes). Required for efficient processing of 16S rRNA. May interact with the 5'-terminal helix region of 16S rRNA. The polypeptide is Ribosome-binding factor A (Cereibacter sphaeroides (strain ATCC 17025 / ATH 2.4.3) (Rhodobacter sphaeroides)).